The primary structure comprises 897 residues: Translation initiation factor IF-2 (897 aa).

In terms of domain architecture, tr-type G spans 402-570 (NRAPIVTIMG…SILVQSEILE (169 aa)). Residues 411-418 (GHVDHGKT) are G1. 411–418 (GHVDHGKT) is a binding site for GTP. A G2 region spans residues 436–440 (GITQN). The G3 stretch occupies residues 458–461 (DTPG). Residues 458–462 (DTPGH) and 512–515 (NKID) each bind GTP. The tract at residues 512-515 (NKID) is G4. A G5 region spans residues 548 to 550 (SAV).

This sequence belongs to the TRAFAC class translation factor GTPase superfamily. Classic translation factor GTPase family. IF-2 subfamily.

Its subcellular location is the cytoplasm. Functionally, one of the essential components for the initiation of protein synthesis. Protects formylmethionyl-tRNA from spontaneous hydrolysis and promotes its binding to the 30S ribosomal subunits. Also involved in the hydrolysis of GTP during the formation of the 70S ribosomal complex. The sequence is that of Translation initiation factor IF-2 from Blochmanniella floridana.